Consider the following 310-residue polypeptide: Olfactory receptor 9Q1 (310 aa).

The Extracellular portion of the chain corresponds to 1–25 (MAEMNLTLVTEFLLIAFTEYPEWAL). The N-linked (GlcNAc...) asparagine glycan is linked to asparagine 5. A helical membrane pass occupies residues 26–46 (PLFLLFLFMYLITVLGNLEMI). The Cytoplasmic segment spans residues 47–54 (ILILMDHQ). A helical membrane pass occupies residues 55–75 (LHAPMYFLLSHLAFMDVCYSS). Topologically, residues 76–99 (ITVPQMLAVLLEHGAALSYTRCAA) are extracellular. A disulfide bridge links cysteine 97 with cysteine 189. A helical membrane pass occupies residues 100-120 (QFFLFTFFGSIDCYLLALMAY). At 121 to 139 (DRYLAVCQPLLYVTILTQQ) the chain is on the cytoplasmic side. The chain crosses the membrane as a helical span at residues 140-160 (ARLSLVAGAYVAGLISALVRT). Residues 161 to 197 (VSAFTLSFCGTSEIDFIFCDLPPLLKLTCGESYTQEV) lie on the Extracellular side of the membrane. The chain crosses the membrane as a helical span at residues 198-217 (LIIMFAIFVIPASMVVILVS). Topologically, residues 218 to 236 (YLFIIVAIMGIPAGSQAKT) are cytoplasmic. Residues 237–257 (FSTCTSHLTAVSLFFGTLIFM) traverse the membrane as a helical segment. Residues 258–270 (YLRGNSDQSSEKN) are Extracellular-facing. The chain crosses the membrane as a helical span at residues 271-291 (RVVSVLYTEVIPMLNPLIYSL). Topologically, residues 292 to 310 (RNKEVKEALRKILNRAKLS) are cytoplasmic.

This sequence belongs to the G-protein coupled receptor 1 family.

It localises to the cell membrane. In terms of biological role, odorant receptor. The protein is Olfactory receptor 9Q1 (OR9Q1) of Homo sapiens (Human).